We begin with the raw amino-acid sequence, 344 residues long: MHRTTRIKITELNPHLMCALCGGYFIDATTIVECLHSFCKTCIVRYLETNKYCPMCDVQVHKTRPLLSIRSDKTLQDIVYKLVPGLFKDEMKRRRDFYAAYPLTEVPNGSNEDRGEVLEQEKGALSDDEIVSLSIEFYEGARDRDEKKGPLENGDGDKEKTGVRFLRCPAAMTVMHLAKFLRNKMDVPSKYKVEVLYEDEPLKEYYTLMDIAYIYPWRRNGPLPLKYRVQPACKRLTLATVPTPSEGTNTSGASECESVSDKAPSPATLPATSSSLPSPATPSHGSPSSHGPPATHPTSPTPPSTASGATTAANGGSLNCLQTPSSTSRGRKMTVNGAPVPPLT.

An RING-type zinc finger spans residues 18 to 57; sequence CALCGGYFIDATTIVECLHSFCKTCIVRYLETNKYCPMCD. Residues lysine 51 and lysine 88 each participate in a glycyl lysine isopeptide (Lys-Gly) (interchain with G-Cter in SUMO2) cross-link. Residues 81-95 carry the Nuclear localization signal motif; it reads KLVPGLFKDEMKRRR. Over residues 240-253 the composition is skewed to polar residues; it reads TVPTPSEGTNTSGA. The disordered stretch occupies residues 240 to 344; sequence TVPTPSEGTN…VNGAPVPPLT (105 aa). A compositionally biased stretch (low complexity) spans 263 to 313; sequence APSPATLPATSSSLPSPATPSHGSPSSHGPPATHPTSPTPPSTASGATTAA. Residues 314–328 are compositionally biased toward polar residues; sequence NGGSLNCLQTPSSTS. Phosphothreonine is present on threonine 344.

As to quaternary structure, exists as both a monomer and homodimer. Component of a PRC1-like complex. Interacts with CBX8, RING1 and RNF2. Interacts with CBX7. Interacts with PHC2. Post-translationally, phosphorylated. Homodimer formation is regulated by phosphorylation with only unphosphorylated proteins forming homodimers. Detected in all tissues examined with high expression found in placenta lung and kidney and low expression, in liver, pancreas and skeletal muscle.

It localises to the nucleus. Functionally, transcriptional repressor. Binds specifically to the DNA sequence 5'-GACTNGACT-3'. Has tumor suppressor activity. May play a role in control of cell proliferation and/or neural cell development. Regulates proliferation of early T progenitor cells by maintaining expression of HES1. Also plays a role in antero-posterior specification of the axial skeleton and negative regulation of the self-renewal activity of hematopoietic stem cells. Component of a Polycomb group (PcG) multiprotein PRC1-like complex, a complex class required to maintain the transcriptionally repressive state of many genes, including Hox genes, throughout development. PcG PRC1 complex acts via chromatin remodeling and modification of histones; it mediates monoubiquitination of histone H2A 'Lys-119', rendering chromatin heritably changed in its expressibility. Within the PRC1-like complex, regulates RNF2 ubiquitin ligase activity. The protein is Polycomb group RING finger protein 2 (PCGF2) of Homo sapiens (Human).